Here is a 429-residue protein sequence, read N- to C-terminus: Putative zinc metalloprotease aq_1964 (429 aa).

Histidine 17 is a Zn(2+) binding site. Glutamate 18 is a catalytic residue. Histidine 21 lines the Zn(2+) pocket. Residues 88–110 (ILIALGGPLFNFLFTILVFALVY) form a helical membrane-spanning segment. Residues 189 to 265 (TIKVPNVQKG…AIKLKILRNG (77 aa)) form the PDZ domain. 2 helical membrane-spanning segments follow: residues 369–391 (IFNL…IEWL) and 406–428 (RVGL…LRLL).

Belongs to the peptidase M50B family. The cofactor is Zn(2+).

Its subcellular location is the cell inner membrane. This Aquifex aeolicus (strain VF5) protein is Putative zinc metalloprotease aq_1964.